An 801-amino-acid polypeptide reads, in one-letter code: Phenylalanine--tRNA ligase beta subunit (801 aa).

The 114-residue stretch at 39–152 (ARAFSGVVVG…TDAPIGTDIR (114 aa)) folds into the tRNA-binding domain. The B5 domain maps to 407 to 482 (PARAPITLPI…RIYGYDNIPS (76 aa)). Mg(2+) contacts are provided by D460, D466, E469, and E470. An FDX-ACB domain is found at 706–799 (SKFPQVRRDI…LTVEHSAQLR (94 aa)).

Belongs to the phenylalanyl-tRNA synthetase beta subunit family. Type 1 subfamily. As to quaternary structure, tetramer of two alpha and two beta subunits. Mg(2+) serves as cofactor.

The protein localises to the cytoplasm. The catalysed reaction is tRNA(Phe) + L-phenylalanine + ATP = L-phenylalanyl-tRNA(Phe) + AMP + diphosphate + H(+). The sequence is that of Phenylalanine--tRNA ligase beta subunit from Psychrobacter arcticus (strain DSM 17307 / VKM B-2377 / 273-4).